A 210-amino-acid chain; its full sequence is Selenoprotein T2 (210 aa).

An N-terminal signal peptide occupies residues 1–21; sequence MAEYSQTGILTALLLFTVVTV. Positions 62–65 form a cross-link, cysteinyl-selenocysteine (Cys-Sec); sequence CISU. Sec-65 is a non-standard amino acid (selenocysteine).

Belongs to the SelWTH family. Selenoprotein T subfamily. In terms of processing, may contain a selenide-sulfide bond between Cys-62 and Sec-65. This bond is speculated to serve as redox-active pair. Widely expressed in the embryo.

This is Selenoprotein T2 from Danio rerio (Zebrafish).